Consider the following 644-residue polypeptide: MVRMMIRRLSSQASRFVQPRLLETGTLRIALINCPNELLFCCERGFSTFSDRNLSYRDKLSSGLVGIKADDAVDLFRDMIQSRPLPTVIDFNRLFSAIAKTKQYELVLALCKQMESKGIAHSIYTLSIMINCFCRCRKLSYAFSTMGKIMKLGYEPDTVIFNTLLNGLCLECRVSEALELVDRMVEMGHKPTLITLNTLVNGLCLNGKVSDAVVLIDRMVETGFQPNEVTYGPVLNVMCKSGQTALAMELLRKMEERNIKLDAVKYSIIIDGLCKDGSLDNAFNLFNEMEIKGFKADIITYNTLIGGFCNAGRWDDGAKLLRDMIKRKISPNVVTFSVLIDSFVKEGKLREADQLLKEMMQRGIAPNTITYNSLIDGFCKENRLEEAIQMVDLMISKGCDPDIMTFNILINGYCKANRIDDGLELFREMSLRGVIANTVTYNTLVQGFCQSGKLEVAKKLFQEMVSRRVRPDIVSYKILLDGLCDNGELEKALEIFGKIEKSKMELDIGIYMIIIHGMCNASKVDDAWDLFCSLPLKGVKLDARAYNIMISELCRKDSLSKADILFRKMTEEGHAPDELTYNILIRAHLGDDDATTAAELIEEMKSSGFPADVSTVKMVINMLSSGELDKSFLDMLSTTRASLK.

A mitochondrion-targeting transit peptide spans Met-1 to Asn-53. PPR repeat units follow at residues Thr-87–His-121, Ser-122–Pro-156, Asp-157–Pro-191, Thr-192–Pro-226, Asn-227–Leu-261, Asp-262–Ala-296, Asp-297–Pro-331, Asn-332–Pro-366, Asn-367–Pro-401, Asp-402–Ala-436, Asn-437–Pro-471, Asp-472–Leu-506, Asp-507–Leu-541, Asp-542–Pro-576, and Asp-577–Ala-611.

This sequence belongs to the PPR family. P subfamily.

It localises to the mitochondrion. This is Pentatricopeptide repeat-containing protein At1g12775, mitochondrial from Arabidopsis thaliana (Mouse-ear cress).